The sequence spans 357 residues: Embryonic growth/differentiation factor 1 (357 aa).

The signal sequence occupies residues methionine 1–leucine 23. Positions alanine 24 to arginine 237 are excised as a propeptide. An N-linked (GlcNAc...) asparagine glycan is attached at asparagine 191. 3 cysteine pairs are disulfide-bonded: cysteine 251-cysteine 322, cysteine 280-cysteine 354, and cysteine 284-cysteine 356.

Belongs to the TGF-beta family. As to quaternary structure, homodimer; disulfide-linked. Expressed almost exclusively in the nervous system.

The protein localises to the secreted. Its function is as follows. May mediate cell differentiation events during embryonic development. In Mus musculus (Mouse), this protein is Embryonic growth/differentiation factor 1 (Gdf1).